Here is a 549-residue protein sequence, read N- to C-terminus: Chaperonin GroEL (549 aa).

Residues 29 to 32 (TLGP), Lys-50, 86 to 90 (DGTTT), Gly-413, 479 to 481 (NAA), and Asp-496 contribute to the ATP site. A disordered region spans residues 522–549 (VSDKPEKPQQGGQGGGGMGGGDMGGMDF). Gly residues predominate over residues 532–549 (GGQGGGGMGGGDMGGMDF).

This sequence belongs to the chaperonin (HSP60) family. As to quaternary structure, forms a cylinder of 14 subunits composed of two heptameric rings stacked back-to-back. Interacts with the co-chaperonin GroES.

It is found in the cytoplasm. The enzyme catalyses ATP + H2O + a folded polypeptide = ADP + phosphate + an unfolded polypeptide.. Together with its co-chaperonin GroES, plays an essential role in assisting protein folding. The GroEL-GroES system forms a nano-cage that allows encapsulation of the non-native substrate proteins and provides a physical environment optimized to promote and accelerate protein folding. The sequence is that of Chaperonin GroEL from Deinococcus deserti (strain DSM 17065 / CIP 109153 / LMG 22923 / VCD115).